The primary structure comprises 686 residues: Catalase-2 (686 aa).

Positions 1-27 (MSDDQNKRVNEHSKDEQLEQYRTDNSG) are enriched in basic and acidic residues. The disordered stretch occupies residues 1–43 (MSDDQNKRVNEHSKDEQLEQYRTDNSGKKMTTNQGLRVSEDEH). Active-site residues include His-78 and Asn-151. Tyr-365 is a heme binding site.

Belongs to the catalase family. HPII subfamily. Requires heme as cofactor.

The catalysed reaction is 2 H2O2 = O2 + 2 H2O. In terms of biological role, decomposes hydrogen peroxide into water and oxygen; serves to protect cells from the toxic effects of hydrogen peroxide. Involved in sporulation. The sequence is that of Catalase-2 (katE) from Bacillus subtilis (strain 168).